The chain runs to 183 residues: MVRKLKTHEQKLLKKTDFMSWQVDQQGKQGDMLRKFYVKKREHYALYNTLAAKSREVADLIKNLSESDPFRSKCTEDMLTKFYAAGLVPTSDTLERIGKVTGASFARRRLPVVMRNIGMCESVKTASDLVEQGHVRIGTKLVTDPAFMVTRSSEDMITWTKASKIKKHVMDYNNTRDDFDLMD.

One can recognise an S4 RNA-binding domain in the interval 108-174 (RRLPVVMRNI…IKKHVMDYNN (67 aa)).

It belongs to the universal ribosomal protein uS4 family. In terms of assembly, component of a heterotrimeric complex containing imp3, imp4 and mpp10.

Its subcellular location is the nucleus. The protein resides in the nucleolus. Its function is as follows. Component of the U3 small nucleolar ribonucleoprotein. Required for the early cleavages at sites A0, A1 and A2 during 18S ribosomal pre-RNA processing. This chain is U3 small nucleolar ribonucleoprotein protein imp3, found in Caenorhabditis elegans.